The sequence spans 135 residues: Snaclec rhodocetin subunit gamma (135 aa).

Intrachain disulfides connect Cys-4/Cys-15, Cys-32/Cys-129, and Cys-104/Cys-121. Residues Tyr-11–Lys-130 form the C-type lectin domain.

It belongs to the snaclec family. As to quaternary structure, heterotetramer of subunit alpha, beta, gamma and delta; only the gamma and the delta subunits are disulfide-linked. Alpha-beta heterodimer and gamma-delta heterodimer associate orthogonally, giving a cruciform conformation. This heterotetramer may covalently dimerizes thanks to the gamma subunit. As to expression, expressed by the venom gland.

Its subcellular location is the secreted. In terms of biological role, potent inhibitor of collagen-induced platelet aggregation. It acts by binding to the integrin alpha2A domain and blocks collagen binding to integrin alpha-2/beta-1 (ITGA2/ITGB1). The gamma/delta subunits mainly contribute to this activity. The polypeptide is Snaclec rhodocetin subunit gamma (Calloselasma rhodostoma (Malayan pit viper)).